Reading from the N-terminus, the 192-residue chain is Xanthine phosphoribosyltransferase 2 (192 aa).

Leu20 and Asn27 together coordinate xanthine. Position 131-135 (131-135 (ANACA)) interacts with 5-phospho-alpha-D-ribose 1-diphosphate. A xanthine-binding site is contributed by Lys159.

Belongs to the purine/pyrimidine phosphoribosyltransferase family. Xpt subfamily. Homodimer.

The protein localises to the cytoplasm. The enzyme catalyses XMP + diphosphate = xanthine + 5-phospho-alpha-D-ribose 1-diphosphate. It functions in the pathway purine metabolism; XMP biosynthesis via salvage pathway; XMP from xanthine: step 1/1. Functionally, converts the preformed base xanthine, a product of nucleic acid breakdown, to xanthosine 5'-monophosphate (XMP), so it can be reused for RNA or DNA synthesis. In Clostridium perfringens (strain ATCC 13124 / DSM 756 / JCM 1290 / NCIMB 6125 / NCTC 8237 / Type A), this protein is Xanthine phosphoribosyltransferase 2.